Consider the following 205-residue polypeptide: MSSCFGSKKKPIYRKIVILGDGAAGKTSLLNVFTKGYFPQVYEPTIFENYIHDIFVDGNSIELSLWDTAGQEEYDQLRSLSYSDTHVIMICFAVDSRDSLENVITKWLPEVSSNCPGVKLVLVALKCDLRGADEEQVDHSKIIDYEEGLAAAKKINAVRYLECSAKLNRGVNEAFTEAARVALAAQPRGTKDGADESHGTGCIIA.

Residue 20–27 (GDGAAGKT) coordinates GTP. Residues 42-50 (YEPTIFENY) carry the Effector region motif. Residues 67-71 (DTAGQ) and 125-128 (LKCD) contribute to the GTP site. C202 bears the Cysteine methyl ester mark. The S-geranylgeranyl cysteine moiety is linked to residue C202. Residues 203–205 (IIA) constitute a propeptide, removed in mature form.

It belongs to the small GTPase superfamily. Rho family. Interacts with for3. Palmitoylated by the erf2-erf4 complex.

It is found in the cell membrane. Functionally, involved in controlling cell shape and septation. Regulates cell separation by modulating the function of the exocyst complex. Involved in post-Golgi vesicle transport. Involved in driving sexual development in a palmitoylation-dependent manner. The chain is GTP-binding protein rho3 (rho3) from Schizosaccharomyces pombe (strain 972 / ATCC 24843) (Fission yeast).